The following is a 74-amino-acid chain: Putative defensin-like protein 128 (74 aa).

Positions 1–24 (MSKLTNVVIFIVFFLGMMAKETQG) are cleaved as a signal peptide. Disulfide bonds link Cys-28–Cys-72, Cys-37–Cys-56, Cys-42–Cys-66, and Cys-46–Cys-68.

The protein belongs to the DEFL family.

The protein resides in the secreted. This chain is Putative defensin-like protein 128 (LCR8), found in Arabidopsis thaliana (Mouse-ear cress).